The chain runs to 457 residues: ATP synthase subunit beta (457 aa).

147 to 154 serves as a coordination point for ATP; sequence GGAGVGKT.

It belongs to the ATPase alpha/beta chains family. As to quaternary structure, F-type ATPases have 2 components, CF(1) - the catalytic core - and CF(0) - the membrane proton channel. CF(1) has five subunits: alpha(3), beta(3), gamma(1), delta(1), epsilon(1). CF(0) has three main subunits: a(1), b(2) and c(9-12). The alpha and beta chains form an alternating ring which encloses part of the gamma chain. CF(1) is attached to CF(0) by a central stalk formed by the gamma and epsilon chains, while a peripheral stalk is formed by the delta and b chains.

It is found in the cell inner membrane. The catalysed reaction is ATP + H2O + 4 H(+)(in) = ADP + phosphate + 5 H(+)(out). Its function is as follows. Produces ATP from ADP in the presence of a proton gradient across the membrane. The catalytic sites are hosted primarily by the beta subunits. The protein is ATP synthase subunit beta of Pasteurella multocida (strain Pm70).